We begin with the raw amino-acid sequence, 364 residues long: UDP-N-acetylglucosamine--N-acetylmuramyl-(pentapeptide) pyrophosphoryl-undecaprenol N-acetylglucosamine transferase (364 aa).

Residues 12–14 (TGG), Asn124, Arg167, Ser195, Ile249, 268–273 (ALTVSE), and Gln294 each bind UDP-N-acetyl-alpha-D-glucosamine.

The protein belongs to the glycosyltransferase 28 family. MurG subfamily.

It is found in the cell inner membrane. It carries out the reaction di-trans,octa-cis-undecaprenyl diphospho-N-acetyl-alpha-D-muramoyl-L-alanyl-D-glutamyl-meso-2,6-diaminopimeloyl-D-alanyl-D-alanine + UDP-N-acetyl-alpha-D-glucosamine = di-trans,octa-cis-undecaprenyl diphospho-[N-acetyl-alpha-D-glucosaminyl-(1-&gt;4)]-N-acetyl-alpha-D-muramoyl-L-alanyl-D-glutamyl-meso-2,6-diaminopimeloyl-D-alanyl-D-alanine + UDP + H(+). It participates in cell wall biogenesis; peptidoglycan biosynthesis. Its function is as follows. Cell wall formation. Catalyzes the transfer of a GlcNAc subunit on undecaprenyl-pyrophosphoryl-MurNAc-pentapeptide (lipid intermediate I) to form undecaprenyl-pyrophosphoryl-MurNAc-(pentapeptide)GlcNAc (lipid intermediate II). The chain is UDP-N-acetylglucosamine--N-acetylmuramyl-(pentapeptide) pyrophosphoryl-undecaprenol N-acetylglucosamine transferase from Alteromonas mediterranea (strain DSM 17117 / CIP 110805 / LMG 28347 / Deep ecotype).